Reading from the N-terminus, the 581-residue chain is Pyridine nucleotide-disulfide oxidoreductase domain-containing protein 2 (581 aa).

38-71 (VVIGAGHNGLVAAAYLQRLGVNTAVFERRHVIGG) provides a ligand contact to FAD.

It belongs to the carotenoid/retinoid oxidoreductase family. Interacts with COX5B; this interaction may contribute to localize PYROXD2 to the inner face of the inner mitochondrial membrane.

The protein resides in the mitochondrion matrix. In terms of biological role, probable oxidoreductase that may play a role as regulator of mitochondrial function. The polypeptide is Pyridine nucleotide-disulfide oxidoreductase domain-containing protein 2 (Rattus norvegicus (Rat)).